The sequence spans 228 residues: 2-C-methyl-D-erythritol 4-phosphate cytidylyltransferase (228 aa).

It belongs to the IspD/TarI cytidylyltransferase family. IspD subfamily.

The catalysed reaction is 2-C-methyl-D-erythritol 4-phosphate + CTP + H(+) = 4-CDP-2-C-methyl-D-erythritol + diphosphate. The protein operates within isoprenoid biosynthesis; isopentenyl diphosphate biosynthesis via DXP pathway; isopentenyl diphosphate from 1-deoxy-D-xylulose 5-phosphate: step 2/6. Its function is as follows. Catalyzes the formation of 4-diphosphocytidyl-2-C-methyl-D-erythritol from CTP and 2-C-methyl-D-erythritol 4-phosphate (MEP). The chain is 2-C-methyl-D-erythritol 4-phosphate cytidylyltransferase from Halalkalibacterium halodurans (strain ATCC BAA-125 / DSM 18197 / FERM 7344 / JCM 9153 / C-125) (Bacillus halodurans).